Here is a 514-residue protein sequence, read N- to C-terminus: Alpha-amylase (514 aa).

The first 31 residues, 1 to 31 (MIQKRKRTVSFRLVLMCTLLFVSLPITKTSA), serve as a signal peptide directing secretion. The Ca(2+) site is built by Asn-133, Asp-190, Ala-212, Asp-214, Asp-225, Asp-231, Asp-233, and Asp-235. Asp-190 is a binding site for Na(+). Asp-214, Asp-225, and Asp-231 together coordinate Na(+). Asp-262 functions as the Nucleophile in the catalytic mechanism. Residue His-266 coordinates Ca(2+). Catalysis depends on Glu-292, which acts as the Proton donor. Ca(2+)-binding residues include Gly-331, Asp-438, and Asp-461.

Belongs to the glycosyl hydrolase 13 family. Monomer. Requires Ca(2+) as cofactor. It depends on Na(+) as a cofactor.

The protein localises to the secreted. The catalysed reaction is Endohydrolysis of (1-&gt;4)-alpha-D-glucosidic linkages in polysaccharides containing three or more (1-&gt;4)-alpha-linked D-glucose units.. This Bacillus amyloliquefaciens (Bacillus velezensis) protein is Alpha-amylase.